A 503-amino-acid chain; its full sequence is Inosine-5'-monophosphate dehydrogenase 1 (503 aa).

N-acetylserine is present on S2. Positions 167-225 (MKSCDSSDYCVPWEIDFEKLEFVLEDKQKGFVVLERDGETVNVVTKDDIQRVKGYPKSG) constitute a CBS domain. NAD(+)-binding positions include 265-267 (DSS) and 315-317 (GMG). G317 and G319 together coordinate K(+). IMP is bound at residue S320. A K(+)-binding site is contributed by C322. C322 serves as the catalytic Thioimidate intermediate. IMP contacts are provided by residues 355–357 (DGG), 378–379 (GS), and 402–406 (YRGMG). Catalysis depends on R418, which acts as the Proton acceptor. Q430 serves as a coordination point for IMP. K(+)-binding residues include E489, G490, and G491.

It belongs to the IMPDH/GMPR family. In terms of assembly, homotetramer. The cofactor is K(+).

It is found in the cytoplasm. The enzyme catalyses IMP + NAD(+) + H2O = XMP + NADH + H(+). It participates in purine metabolism; XMP biosynthesis via de novo pathway; XMP from IMP: step 1/1. Mycophenolic acid (MPA) is a non-competitive inhibitor that prevents formation of the closed enzyme conformation by binding to the same site as the amobile flap. In contrast, mizoribine monophosphate (MZP) is a competitive inhibitor that induces the closed conformation. MPA is a potent inhibitor of mammalian IMPDHs but a poor inhibitor of the bacterial enzymes. MZP is a more potent inhibitor of bacterial IMPDH. Functionally, catalyzes the conversion of inosine 5'-phosphate (IMP) to xanthosine 5'-phosphate (XMP), the first committed and rate-limiting step in the de novo synthesis of guanine nucleotides, and therefore plays an important role in the regulation of cell growth. This chain is Inosine-5'-monophosphate dehydrogenase 1, found in Arabidopsis thaliana (Mouse-ear cress).